Reading from the N-terminus, the 156-residue chain is RNA polymerase sigma factor SigS (156 aa).

The Polymerase core binding signature appears at 29-44 (EYYQLLLIKMWQLSQI). A DNA-binding region (H-T-H motif) is located at residues 126 to 145 (QFEIAEIMSLSLSTIKLIKM).

This sequence belongs to the sigma-70 factor family.

Its function is as follows. Sigma factors are initiation factors that promote the attachment of RNA polymerase to specific initiation sites and are then released. Sigma-S contributes to the protection against external stress, thus playing a role in cellular fitness and survival. The polypeptide is RNA polymerase sigma factor SigS (sigS) (Staphylococcus aureus (strain COL)).